Reading from the N-terminus, the 362-residue chain is UV excision repair protein RAD23 homolog A (362 aa).

Residues 1-81 (MAVTITLKTL…VVVMVTKAKT (81 aa)) form the Ubiquitin-like domain. Disordered regions lie at residues 80–160 (KTSP…LVTG) and 201–227 (GIPG…TEAG). Residues 88–109 (PSEASPTATPESSTSFPSAPAS) are compositionally biased toward low complexity. A Glycyl lysine isopeptide (Lys-Gly) (interchain with G-Cter in ubiquitin) cross-link involves residue Lys122. Phosphoserine is present on residues Ser123, Ser128, Ser133, Ser136, and Ser138. Residues 126–144 (EESAPTTSPESVSGSVPSS) show a composition bias toward low complexity. A UBA 1 domain is found at 161 to 201 (SEYETMLTEIMSMGYERERVVAALRASYNNPHRAVEYLLTG). 3 positions are modified to phosphoserine: Ser205, Ser294, and Ser356. The UBA 2 domain occupies 317–357 (PQEKEAIERLKALGFPESLVIQAYFACEKNENLAANFLLSQ).

Belongs to the RAD23 family. Interacts with XPC; the interaction is suggesting the existence of a functional equivalent variant XPC complex. Interacts with PSMD4 and PSMC5. Interacts with ATXN3. Interacts with UBQLN2.

The protein localises to the nucleus. Its function is as follows. Multiubiquitin chain receptor involved in modulation of proteasomal degradation. Binds to 'Lys-48'-linked polyubiquitin chains in a length-dependent manner and with a lower affinity to 'Lys-63'-linked polyubiquitin chains. Proposed to be capable to bind simultaneously to the 26S proteasome and to polyubiquitinated substrates and to deliver ubiquitinated proteins to the proteasome. Involved in nucleotide excision repair and is thought to be functional equivalent for RAD23B in global genome nucleotide excision repair (GG-NER) by association with XPC. In vitro, XPC:RAD23A dimer has NER activity. Can stabilize XPC. The polypeptide is UV excision repair protein RAD23 homolog A (RAD23A) (Bos taurus (Bovine)).